Reading from the N-terminus, the 624-residue chain is Actin-related protein 8 (624 aa).

Met1 is modified (N-acetylmethionine). The segment covering 1–25 has biased composition (basic and acidic residues); sequence MTQAEKGDTENGKEKGGEKEKEQRG. The segment at 1–29 is disordered; that stretch reads MTQAEKGDTENGKEKGGEKEKEQRGVKRP. 2 residues coordinate ATP: Ser55 and Thr56. Ser132 is subject to Phosphoserine. Position 283–286 (283–286) interacts with ATP; that stretch reads DVGD. At Ser412 the chain carries Phosphoserine. Residues 430–462 form a disordered region; it reads SKQEQSAKATADRKSASKPIGFEGDLRGQSSDL.

Belongs to the actin family. ARP8 subfamily. Component of the chromatin remodeling INO80 complex; specifically part of a complex module associated with the DBINO domain of INO80. Exists as monomers and dimers, but the dimer is most probably the biologically relevant form required for stable interactions with histones that exploits the twofold symmetry of the nucleosome core.

It is found in the nucleus. Its subcellular location is the chromosome. Plays an important role in the functional organization of mitotic chromosomes. Exhibits low basal ATPase activity, and unable to polymerize. In terms of biological role, proposed core component of the chromatin remodeling INO80 complex which is involved in transcriptional regulation, DNA replication and probably DNA repair. Required for the recruitment of INO80 (and probably the INO80 complex) to sites of DNA damage Strongly prefer nucleosomes and H3-H4 tetramers over H2A-H2B dimers, suggesting it may act as a nucleosome recognition module within the complex. The polypeptide is Actin-related protein 8 (ACTR8) (Pongo abelii (Sumatran orangutan)).